The sequence spans 452 residues: UDP-N-acetylmuramoylalanine--D-glutamate ligase (452 aa).

ATP is bound at residue 119–125 (GSNGKTT).

Belongs to the MurCDEF family.

Its subcellular location is the cytoplasm. It catalyses the reaction UDP-N-acetyl-alpha-D-muramoyl-L-alanine + D-glutamate + ATP = UDP-N-acetyl-alpha-D-muramoyl-L-alanyl-D-glutamate + ADP + phosphate + H(+). Its pathway is cell wall biogenesis; peptidoglycan biosynthesis. Functionally, cell wall formation. Catalyzes the addition of glutamate to the nucleotide precursor UDP-N-acetylmuramoyl-L-alanine (UMA). This Streptococcus equi subsp. zooepidemicus (strain MGCS10565) protein is UDP-N-acetylmuramoylalanine--D-glutamate ligase.